Reading from the N-terminus, the 198-residue chain is Dephospho-CoA kinase (198 aa).

The region spanning 4–198 (IIGITGGIAS…DSQLRRLQNE (195 aa)) is the DPCK domain. 12 to 17 (ASGKST) contributes to the ATP binding site.

The protein belongs to the CoaE family.

Its subcellular location is the cytoplasm. The enzyme catalyses 3'-dephospho-CoA + ATP = ADP + CoA + H(+). It participates in cofactor biosynthesis; coenzyme A biosynthesis; CoA from (R)-pantothenate: step 5/5. Functionally, catalyzes the phosphorylation of the 3'-hydroxyl group of dephosphocoenzyme A to form coenzyme A. The chain is Dephospho-CoA kinase from Streptococcus mutans serotype c (strain ATCC 700610 / UA159).